A 466-amino-acid chain; its full sequence is Myocardial zonula adherens protein (466 aa).

Over residues Met-1–Leu-10 the composition is skewed to polar residues. A signal peptide spans Met-1–Ala-16. Residues Met-1 to Pro-68 form a disordered region. The segment covering Thr-45 to Pro-55 has biased composition (basic and acidic residues). Coiled coils occupy residues Asn-95–Ser-137 and His-187–Thr-415.

Belongs to the MYZAP family. In terms of assembly, interacts with DSP, MPRIP and TJP1/ZO1. Interaction with MPRIP inhibits the activation of transcription factor SRF. Interacts with GRIN1. Interacts with DYNLL1. Detected in heart myocardium and lung.

It is found in the cytoplasm. The protein resides in the cytoskeleton. It localises to the cell membrane. Its subcellular location is the myofibril. The protein localises to the sarcomere. It is found in the i band. The protein resides in the z line. It localises to the cell junction. Functionally, plays a role in cellular signaling via Rho-related GTP-binding proteins and activation of transcription factor SRF. Targets TJP1 to cell junctions. In cortical neurons, may play a role in glutaminergic signal transduction through interaction with the NMDA receptor subunit GRIN1. The sequence is that of Myocardial zonula adherens protein (Myzap) from Mus musculus (Mouse).